Reading from the N-terminus, the 941-residue chain is Bifunctional uridylyltransferase/uridylyl-removing enzyme (941 aa).

Residues 1-372 (MAKHDLSDAT…RFAHRPRRIP (372 aa)) are uridylyltransferase. A uridylyl-removing region spans residues 373-728 (GTPEFIEDRG…VRTHSFHAIT (356 aa)). Residues 489-611 (VDEHLIRSVG…VQSLDRLRML (123 aa)) form the HD domain. ACT domains lie at 729–810 (EITV…EVIA) and 840–919 (VIEI…LREQ). Residues 916-941 (LREQMPSGIIAPAATKSPAAEKKARV) are disordered.

It belongs to the GlnD family. It depends on Mg(2+) as a cofactor.

The catalysed reaction is [protein-PII]-L-tyrosine + UTP = [protein-PII]-uridylyl-L-tyrosine + diphosphate. It carries out the reaction [protein-PII]-uridylyl-L-tyrosine + H2O = [protein-PII]-L-tyrosine + UMP + H(+). Its activity is regulated as follows. Uridylyltransferase (UTase) activity is inhibited by glutamine, while glutamine activates uridylyl-removing (UR) activity. Its function is as follows. Modifies, by uridylylation and deuridylylation, the PII regulatory proteins (GlnB and homologs), in response to the nitrogen status of the cell that GlnD senses through the glutamine level. Under low glutamine levels, catalyzes the conversion of the PII proteins and UTP to PII-UMP and PPi, while under higher glutamine levels, GlnD hydrolyzes PII-UMP to PII and UMP (deuridylylation). Thus, controls uridylylation state and activity of the PII proteins, and plays an important role in the regulation of nitrogen assimilation and metabolism. The chain is Bifunctional uridylyltransferase/uridylyl-removing enzyme from Allorhizobium ampelinum (strain ATCC BAA-846 / DSM 112012 / S4) (Agrobacterium vitis (strain S4)).